A 166-amino-acid polypeptide reads, in one-letter code: Probable protein tyrosine phosphatase type IVA A (166 aa).

One can recognise a Tyrosine-protein phosphatase domain in the interval 10 to 164 (NPASLVESST…YKSKKKSSCR (155 aa)). Cysteine 52 and cysteine 107 are disulfide-bonded. Aspartate 75 functions as the Proton donor in the catalytic mechanism. The active-site Phosphocysteine intermediate is the cysteine 107. 108 to 113 (VAGLGR) contributes to the phosphate binding site. Arginine 113 is a substrate binding site. At cysteine 163 the chain carries Cysteine methyl ester. Cysteine 163 carries S-farnesyl cysteine lipidation. Positions 164 to 166 (RIM) are cleaved as a propeptide — removed in mature form.

The protein belongs to the protein-tyrosine phosphatase family.

It is found in the membrane. The catalysed reaction is O-phospho-L-tyrosyl-[protein] + H2O = L-tyrosyl-[protein] + phosphate. The sequence is that of Probable protein tyrosine phosphatase type IVA A from Dictyostelium discoideum (Social amoeba).